Consider the following 287-residue polypeptide: 4-hydroxybenzoate octaprenyltransferase (287 aa).

6 consecutive transmembrane segments (helical) span residues 23–40 (IGSL…WLAG), 98–118 (ILFV…NKMT), 141–161 (LPQF…YAAV), 163–183 (ESLP…TVAY), 213–233 (IIIG…GNIT), and 235–255 (LGIP…YQQI).

Belongs to the UbiA prenyltransferase family. Mg(2+) is required as a cofactor.

The protein localises to the cell inner membrane. The enzyme catalyses all-trans-octaprenyl diphosphate + 4-hydroxybenzoate = 4-hydroxy-3-(all-trans-octaprenyl)benzoate + diphosphate. It functions in the pathway cofactor biosynthesis; ubiquinone biosynthesis. Functionally, catalyzes the prenylation of para-hydroxybenzoate (PHB) with an all-trans polyprenyl group. Mediates the second step in the final reaction sequence of ubiquinone-8 (UQ-8) biosynthesis, which is the condensation of the polyisoprenoid side chain with PHB, generating the first membrane-bound Q intermediate 3-octaprenyl-4-hydroxybenzoate. The sequence is that of 4-hydroxybenzoate octaprenyltransferase from Pectobacterium atrosepticum (strain SCRI 1043 / ATCC BAA-672) (Erwinia carotovora subsp. atroseptica).